Reading from the N-terminus, the 763-residue chain is Phosphoglycerol transferase I (763 aa).

4 consecutive transmembrane segments (helical) span residues 1–21 (MSELLSFALFLASVLIYAWKA), 26–46 (WWFAATLTVLGLFVVLNITLF), 77–97 (ILPGIGIVLGLAAVFGALGWI), and 108–128 (FGYSLLALLLALGSVDASPAF).

This sequence belongs to the OpgB family.

The protein resides in the cell inner membrane. The enzyme catalyses a phosphatidylglycerol + a membrane-derived-oligosaccharide D-glucose = a 1,2-diacyl-sn-glycerol + a membrane-derived-oligosaccharide 6-(glycerophospho)-D-glucose.. Its pathway is glycan metabolism; osmoregulated periplasmic glucan (OPG) biosynthesis. Functionally, transfers a phosphoglycerol residue from phosphatidylglycerol to the membrane-bound nascent glucan backbones. The polypeptide is Phosphoglycerol transferase I (Escherichia coli O6:K15:H31 (strain 536 / UPEC)).